A 423-amino-acid chain; its full sequence is Gamma-glutamyl phosphate reductase (423 aa).

The protein belongs to the gamma-glutamyl phosphate reductase family.

The protein resides in the cytoplasm. The enzyme catalyses L-glutamate 5-semialdehyde + phosphate + NADP(+) = L-glutamyl 5-phosphate + NADPH + H(+). It participates in amino-acid biosynthesis; L-proline biosynthesis; L-glutamate 5-semialdehyde from L-glutamate: step 2/2. Catalyzes the NADPH-dependent reduction of L-glutamate 5-phosphate into L-glutamate 5-semialdehyde and phosphate. The product spontaneously undergoes cyclization to form 1-pyrroline-5-carboxylate. The sequence is that of Gamma-glutamyl phosphate reductase from Paraburkholderia phytofirmans (strain DSM 17436 / LMG 22146 / PsJN) (Burkholderia phytofirmans).